We begin with the raw amino-acid sequence, 305 residues long: MTEQLHLKIPASTANLGVGFDSIGMAIDKYLHLYVKRIEEEEWEFTYLNSELDSLPKNKDNYVFKVAQQVASKYNVKLPSLSVEMRSDIPLARGLGSSASALVGALYIANYFGNIQLSKYELLQLATEIEGHPDNVAPTIYGGLLAGFYNPDTKETNVAHIDVPDVDIILTIPPYELKTEDSRNVLPDQFSHKRAVQSSAISNTMLCALIQHNYGLAGKMMSQDGFHEPYRQHLISEFKEVKAIAQQYDAYATVISGAGPTILTMSPKEKSGQLVRALRKAVTTCHSELATINEIGVVEEIVYPS.

90 to 100 is an ATP binding site; sequence PLARGLGSSAS.

Belongs to the GHMP kinase family. Homoserine kinase subfamily.

It is found in the cytoplasm. The enzyme catalyses L-homoserine + ATP = O-phospho-L-homoserine + ADP + H(+). The protein operates within amino-acid biosynthesis; L-threonine biosynthesis; L-threonine from L-aspartate: step 4/5. Functionally, catalyzes the ATP-dependent phosphorylation of L-homoserine to L-homoserine phosphate. The chain is Homoserine kinase from Staphylococcus haemolyticus (strain JCSC1435).